A 155-amino-acid polypeptide reads, in one-letter code: Transcriptional repressor NrdR (155 aa).

The segment at C3 to C34 is a zinc-finger region. In terms of domain architecture, ATP-cone spans P49–E139.

Belongs to the NrdR family. Requires Zn(2+) as cofactor.

Negatively regulates transcription of bacterial ribonucleotide reductase nrd genes and operons by binding to NrdR-boxes. The protein is Transcriptional repressor NrdR of Ectopseudomonas mendocina (strain ymp) (Pseudomonas mendocina).